Consider the following 344-residue polypeptide: Lysophosphatidic acid receptor 6 (344 aa).

Residues 1–19 (MVSVNSSHCFYNDSFKYTL) are Extracellular-facing. A glycan (N-linked (GlcNAc...) asparagine) is linked at asparagine 5. Residues 20 to 46 (YGCMFSMVFVLGLISNCVAIYIFICVL) form a helical membrane-spanning segment. Residues 47 to 55 (KVRNETTTY) lie on the Cytoplasmic side of the membrane. A helical transmembrane segment spans residues 56 to 79 (MINLAMSDLLFVFTLPFRIFYFTT). Residues 80-92 (RNWPFGDLLCKIS) lie on the Extracellular side of the membrane. An intrachain disulfide couples cysteine 89 to cysteine 168. A helical transmembrane segment spans residues 93 to 112 (VMLFYTNMYGSILFLTCISV). Topologically, residues 113–133 (DRFLAIVYPFKSKTLRTKRNA) are cytoplasmic. The chain crosses the membrane as a helical span at residues 134-154 (KIVCTGVWLTVIGGSAPAVFV). Topologically, residues 155–181 (QSTHSQGNNASEACFENFPEATWKTYL) are extracellular. Residues 182–209 (SRIVIFIEIVGFFIPLILNVTCSSMVLK) traverse the membrane as a helical segment. Residues 210-227 (TLTKPVTLSRSKINKTKV) are Cytoplasmic-facing. A helical transmembrane segment spans residues 228 to 253 (LKMIFVHLIIFCFCFVPYNINLILYS). Topologically, residues 254–272 (LVRTQTFVNCSVVAAVRTM) are extracellular. The helical transmembrane segment at 273 to 292 (YPITLCIAVSNCCFDPIVYY) threads the bilayer. Cysteine 284 is lipidated: S-palmitoyl cysteine. Topologically, residues 293–344 (FTSDTIQNSIKMKNWSVRRSDFRFSEVHGAENFIQHNLQTLKSKIFDNESAA) are cytoplasmic.

The protein belongs to the G-protein coupled receptor 1 family. In terms of tissue distribution, expressed ubiquitously, including in skin and hair follicle cells. Detected in both Henle's and Huxley's layers of the inner root sheath of the hair follicle and in suprabasal layers of the epidermis (at protein level). Expressed at low levels in peripheral blood leukocytes.

It is found in the cell membrane. In terms of biological role, binds to oleoyl-L-alpha-lysophosphatidic acid (LPA). Intracellular cAMP is involved in the receptor activation. Important for the maintenance of hair growth and texture. The protein is Lysophosphatidic acid receptor 6 (LPAR6) of Homo sapiens (Human).